The chain runs to 429 residues: Forkhead box protein A1-A (429 aa).

The fork-head DNA-binding region spans 159 to 253; that stretch reads KPPYSYISLI…ENGCYLRRQK (95 aa). Positions 258–274 are enriched in basic and acidic residues; the sequence is EKTQGGKGNQDGRKDHS. Residues 258–341 form a disordered region; the sequence is EKTQGGKGNQ…HSTHSLAHES (84 aa). A compositionally biased stretch (low complexity) spans 287-304; sequence SSQMDSSSSMSNPSSSPQ. Over residues 325–336 the composition is skewed to polar residues; it reads PLSSHQNHSTHS.

In terms of tissue distribution, at neurula stage, expressed in the notochord but not in the neural floor plate. During tailbud stages, expressed in the neural floor plate. At stage 35, expressed in the rhombencephalon, mesencephalon, pharyngeal pouches, foregut and pronephros. At stage 44, expressed in a region of the gut on the right hand side of the embryo. Expressed in the adult lung and liver.

It is found in the nucleus. Its function is as follows. Probable transcription factor. This chain is Forkhead box protein A1-A (foxa1-a), found in Xenopus laevis (African clawed frog).